Reading from the N-terminus, the 279-residue chain is MKIAYLGPRGSFCSVVAETAFVSEELFAYDSILDVIEAYDEGKCDFALVPIENSTEGTVNMSIDKIFHDSKATVVAEFVLPISQNLLALSKEGKIEHIYSHPQALAQTRNYLREHYPQAKVEITDSTSAAAEFVKNHPDLPIAAVANSYAAKMYDLEIVAKNIQDLAGNSTRFWLLGKEKKSFDLLKTGEKVSLALTLPDNLPGALHKAISVFAWRDIDMTKIESRPLRTRLGQYFFNIDLVNNEKNNLKIPYALEELSGLGVKVRLLGNYAVYSLGEG.

The Prephenate dehydratase domain maps to 2-178 (KIAYLGPRGS…NSTRFWLLGK (177 aa)). The ACT domain maps to 194-270 (LALTLPDNLP…LGVKVRLLGN (77 aa)).

It catalyses the reaction prephenate + H(+) = 3-phenylpyruvate + CO2 + H2O. Its pathway is amino-acid biosynthesis; L-phenylalanine biosynthesis; phenylpyruvate from prephenate: step 1/1. The polypeptide is Prephenate dehydratase (pheA) (Lactococcus lactis subsp. lactis (strain IL1403) (Streptococcus lactis)).